We begin with the raw amino-acid sequence, 483 residues long: Glutamyl-tRNA(Gln) amidotransferase subunit A (483 aa).

Residues Lys76 and Ser151 each act as charge relay system in the active site. Ser175 (acyl-ester intermediate) is an active-site residue.

This sequence belongs to the amidase family. GatA subfamily. As to quaternary structure, heterotrimer of A, B and C subunits.

The enzyme catalyses L-glutamyl-tRNA(Gln) + L-glutamine + ATP + H2O = L-glutaminyl-tRNA(Gln) + L-glutamate + ADP + phosphate + H(+). Its function is as follows. Allows the formation of correctly charged Gln-tRNA(Gln) through the transamidation of misacylated Glu-tRNA(Gln) in organisms which lack glutaminyl-tRNA synthetase. The reaction takes place in the presence of glutamine and ATP through an activated gamma-phospho-Glu-tRNA(Gln). This is Glutamyl-tRNA(Gln) amidotransferase subunit A from Pseudomonas fluorescens (strain Pf0-1).